The chain runs to 229 residues: Cytidylate kinase (229 aa).

12 to 20 (GPSGSGKGT) lines the ATP pocket.

The protein belongs to the cytidylate kinase family. Type 1 subfamily.

It is found in the cytoplasm. The catalysed reaction is CMP + ATP = CDP + ADP. The enzyme catalyses dCMP + ATP = dCDP + ADP. The sequence is that of Cytidylate kinase from Pseudomonas fluorescens (strain ATCC BAA-477 / NRRL B-23932 / Pf-5).